Consider the following 93-residue polypeptide: Putative septation protein SpoVG (93 aa).

The protein belongs to the SpoVG family.

Functionally, could be involved in septation. This chain is Putative septation protein SpoVG, found in Alkaliphilus oremlandii (strain OhILAs) (Clostridium oremlandii (strain OhILAs)).